Here is a 156-residue protein sequence, read N- to C-terminus: UPF0523 protein C (156 aa).

This sequence belongs to the UPF0523 family.

This is UPF0523 protein C from Dictyostelium discoideum (Social amoeba).